A 109-amino-acid chain; its full sequence is Small serum protein 2 (109 aa).

Positions Met1–Gly19 are cleaved as a signal peptide. Intrachain disulfides connect Cys21-Cys72, Cys39-Cys64, Cys59-Cys93, Cys62-Cys71, and Cys84-Cys107.

As to quaternary structure, forms a stable, non-covalent complex with serotriflin.

It localises to the secreted. May serve as a self-defense protein against the toxic effects of the snake venom during accidental envenomation. Does not show inhibitory activity towards brevilysin H6. The chain is Small serum protein 2 from Protobothrops flavoviridis (Habu).